The sequence spans 444 residues: MWMRRNQIVRKLTLGVVTTVLGMSLSFSALSATPVETHGQLSIENGRLVDEQGKRVQLRGVSSHGLQWFGDYVNKDSMKWLRDDWGINVFRVAMYTAADGYISNPSLANKVKEAVAAAQSLGVYIIIDWHILSDNDPNIYKAQAKTFFAEMAGLYGSSPNVIYEIANEPNGGVTWNGQIRPYALEVTDTIRSKDPDNLIIVGTGTWSQDIHDAADNQLPDPNTLYALHFYAGTHGQFLRDRIDYAQSRGAAIFVSEWGTSDASGNGGPFLPESQTWIDFLNNRGVSWVNWSLTDKSEASAALAPGASKSGGWTEQNLSTSGKFVREQIRAGANLGGGDTPTTPTTPTEPTNPGNGTTGDVVLQYRNVDNNPSDDAIRMAVNIKNTGSTPIKLSDLQVRYYFHDDGKPGANLFVDWANVGPNNIVTSTGTPAASTDKANRYVLVT.

The signal sequence occupies residues 1–31 (MWMRRNQIVRKLTLGVVTTVLGMSLSFSALS). Substrate-binding positions include His64, 68–69 (WF), Tyr95, and His130. Glu168 functions as the Proton donor in the catalytic mechanism. Substrate is bound at residue Tyr230. Glu256 serves as the catalytic Nucleophile. Substrate contacts are provided by residues 262-263 (AS), Trp290, and 295-297 (KSE). The tract at residues 332–358 (ANLGGGDTPTTPTTPTEPTNPGNGTTG) is disordered. The segment covering 339–358 (TPTTPTTPTEPTNPGNGTTG) has biased composition (low complexity). The CBM3 domain occupies 356–444 (TTGDVVLQYR…DKANRYVLVT (89 aa)).

It belongs to the glycosyl hydrolase 5 (cellulase A) family.

The protein localises to the secreted. The enzyme catalyses Endohydrolysis of (1-&gt;4)-beta-D-glucosidic linkages in cellulose, lichenin and cereal beta-D-glucans.. This is Endoglucanase N (celN) from Pectobacterium atrosepticum (Erwinia carotovora subsp. atroseptica).